A 301-amino-acid chain; its full sequence is TLR adapter interacting with SLC15A4 on the lysosome (301 aa).

The pLxIS motif signature appears at 290–294 (SLHIS). S294 is subject to Phosphoserine.

Interacts (via pLxIS motif) with IRF5; leading to IRF5 activation. Interacts with SLC15A4; leading to its recruitment to endolysosome. The phosphorylated pLxIS motif constitutes an IRF5-binding motif, leading to recruitment of the transcription factor IRF5 to induce type-I interferons and other cytokines. In terms of tissue distribution, highly expressed in immune cell types such as B-cells, neutrophils, dendritic cells and monocytes, the expression levels are two-three-fold higher in female cells compared to male cells (at protein level). Expressed at low levels in T-cells and NK cells.

The protein resides in the lysosome membrane. The protein localises to the endosome membrane. It localises to the nucleus. It is found in the cytoplasm. In terms of biological role, innate immune adapter that mediates the recruitment and activation of IRF5 downstream of endolysosomal toll-like receptors TLR7, TLR8 and TLR9. Following recruitment to endolysosome by SLC15A4 downstream of TLR7, TLR8 and TLR9, specifically recruits IRF5 transcription factor via its pLxIS motif, leading to IRF5 activation and subsequent expression of type I interferons. Plays a role in the regulation of endolysosomal pH in immune cells such as B-cells, dendritic cells and monocytes. In Homo sapiens (Human), this protein is TLR adapter interacting with SLC15A4 on the lysosome.